Reading from the N-terminus, the 243-residue chain is GrpE protein homolog, mitochondrial (243 aa).

A disordered region spans residues Lys-56 to Gln-79.

It belongs to the GrpE family. Component of the PAM complex, at least composed of mtHsp70, MGE1, TIM44, PAM16, PAM17 and PAM18.

Its subcellular location is the mitochondrion matrix. Functionally, essential component of the PAM complex, a complex required for the translocation of transit peptide-containing proteins from the inner membrane into the mitochondrial matrix in an ATP-dependent manner. Seems to control the nucleotide-dependent binding of SSC1 to substrate proteins. The sequence is that of GrpE protein homolog, mitochondrial (mge1) from Kluyveromyces lactis (strain ATCC 8585 / CBS 2359 / DSM 70799 / NBRC 1267 / NRRL Y-1140 / WM37) (Yeast).